A 203-amino-acid polypeptide reads, in one-letter code: ATP-dependent Clp protease proteolytic subunit 1 (203 aa).

The active-site Nucleophile is S98. The active site involves H123.

The protein belongs to the peptidase S14 family. Fourteen ClpP subunits assemble into 2 heptameric rings which stack back to back to give a disk-like structure with a central cavity, resembling the structure of eukaryotic proteasomes.

The protein resides in the cytoplasm. It carries out the reaction Hydrolysis of proteins to small peptides in the presence of ATP and magnesium. alpha-casein is the usual test substrate. In the absence of ATP, only oligopeptides shorter than five residues are hydrolyzed (such as succinyl-Leu-Tyr-|-NHMec, and Leu-Tyr-Leu-|-Tyr-Trp, in which cleavage of the -Tyr-|-Leu- and -Tyr-|-Trp bonds also occurs).. Its function is as follows. Cleaves peptides in various proteins in a process that requires ATP hydrolysis. Has a chymotrypsin-like activity. Plays a major role in the degradation of misfolded proteins. This Chlamydia felis (strain Fe/C-56) (Chlamydophila felis) protein is ATP-dependent Clp protease proteolytic subunit 1.